Consider the following 640-residue polypeptide: Rab proteins geranylgeranyltransferase component A (640 aa).

Disordered stretches follow at residues D414–N439 and H594–L640. The span at N419–N439 shows a compositional bias: low complexity. Positions I604 to D624 are enriched in acidic residues.

Belongs to the Rab GDI family.

In terms of biological role, substrate-binding subunit (component A) of the Rab geranylgeranyltransferase (GGTase) complex. Binds unprenylated Rab proteins and presents the substrate peptide to the catalytic component B. The component A is thought to be regenerated by transferring its prenylated Rab back to the donor membrane. In Candida albicans (Yeast), this protein is Rab proteins geranylgeranyltransferase component A (MRS6).